A 365-amino-acid polypeptide reads, in one-letter code: Glycerol dehydrogenase (365 aa).

The NAD(+) site is built by Asp37, Gly94, Lys95, Thr116, and Ser119. Asp121 serves as a coordination point for glycerol. NAD(+) is bound by residues Ser125, Leu127, and Tyr131. Residues Asp171, His254, and His271 each contribute to the Zn(2+) site. His254 provides a ligand contact to glycerol.

The protein belongs to the iron-containing alcohol dehydrogenase family. It depends on Zn(2+) as a cofactor.

It catalyses the reaction glycerol + NAD(+) = dihydroxyacetone + NADH + H(+). It participates in polyol metabolism; glycerol fermentation; glycerone phosphate from glycerol (oxidative route): step 1/2. Functionally, catalyzes the NAD-dependent oxidation of glycerol to dihydroxyacetone (glycerone). Allows microorganisms to utilize glycerol as a source of carbon under anaerobic conditions. This is Glycerol dehydrogenase (gldA) from Pseudomonas putida (Arthrobacter siderocapsulatus).